A 122-amino-acid polypeptide reads, in one-letter code: Large ribosomal subunit protein uL14 (122 aa).

This sequence belongs to the universal ribosomal protein uL14 family. Part of the 50S ribosomal subunit. Forms a cluster with proteins L3 and L19. In the 70S ribosome, L14 and L19 interact and together make contacts with the 16S rRNA in bridges B5 and B8.

Its function is as follows. Binds to 23S rRNA. Forms part of two intersubunit bridges in the 70S ribosome. This Psychrobacter arcticus (strain DSM 17307 / VKM B-2377 / 273-4) protein is Large ribosomal subunit protein uL14.